Here is a 501-residue protein sequence, read N- to C-terminus: Aldehyde dehydrogenase 1A1 (501 aa).

An N-acetylserine modification is found at Ser2. An N6-acetyllysine mark is found at Lys91 and Lys128. Residues 167–170 (IPWN), 193–196 (KPAE), 226–227 (GP), and 246–247 (GS) contribute to the NAD(+) site. An N6-acetyllysine modification is found at Lys252. Residue Glu269 is the Proton acceptor of the active site. 269–271 (ELG) provides a ligand contact to NAD(+). Catalysis depends on Cys303, which acts as the Nucleophile. Residues 336-501 (LTPGVSQGPQ…VTIKISQKNS (166 aa)) form a mediates interaction with PRMT3 region. A Phosphothreonine modification is found at Thr337. Position 349-353 (349-353 (EQYEK)) interacts with NAD(+). Lys353 and Lys367 each carry N6-acetyllysine. 400–402 (EIF) lines the NAD(+) pocket. The residue at position 410 (Lys410) is an N6-acetyllysine. Ser413 bears the Phosphoserine mark. Residues Lys419 and Lys495 each carry the N6-acetyllysine modification.

This sequence belongs to the aldehyde dehydrogenase family. In terms of assembly, homotetramer. Interacts with PRMT3; the interaction is direct, inhibits ALDH1A1 aldehyde dehydrogenase activity and is independent of the methyltransferase activity of PRMT3. In terms of processing, the N-terminus is blocked most probably by acetylation. Expressed in muscle, liver, small intestine, kidney, brain, lung, heart but not detected in erythrocytes (at protein level).

The protein localises to the cytoplasm. The protein resides in the cytosol. Its subcellular location is the cell projection. It is found in the axon. The catalysed reaction is an aldehyde + NAD(+) + H2O = a carboxylate + NADH + 2 H(+). The enzyme catalyses all-trans-retinal + NAD(+) + H2O = all-trans-retinoate + NADH + 2 H(+). It carries out the reaction 9-cis-retinal + NAD(+) + H2O = 9-cis-retinoate + NADH + 2 H(+). It catalyses the reaction 11-cis-retinal + NAD(+) + H2O = 11-cis-retinoate + NADH + 2 H(+). The catalysed reaction is 13-cis-retinal + NAD(+) + H2O = 13-cis-retinoate + NADH + 2 H(+). The enzyme catalyses 3-deoxyglucosone + NAD(+) + H2O = 2-dehydro-3-deoxy-D-gluconate + NADH + 2 H(+). It carries out the reaction (E)-4-hydroxynon-2-enal + NAD(+) + H2O = (E)-4-hydroxynon-2-enoate + NADH + 2 H(+). It catalyses the reaction malonaldehyde + NAD(+) + H2O = 3-oxopropanoate + NADH + 2 H(+). The catalysed reaction is hexanal + NAD(+) + H2O = hexanoate + NADH + 2 H(+). The enzyme catalyses propanal + NAD(+) + H2O = propanoate + NADH + 2 H(+). It carries out the reaction acetaldehyde + NAD(+) + H2O = acetate + NADH + 2 H(+). It catalyses the reaction benzaldehyde + NAD(+) + H2O = benzoate + NADH + 2 H(+). The catalysed reaction is 4-aminobutanal + NAD(+) + H2O = 4-aminobutanoate + NADH + 2 H(+). The protein operates within cofactor metabolism; retinol metabolism. Cytosolic dehydrogenase that catalyzes the irreversible oxidation of a wide range of aldehydes to their corresponding carboxylic acid. Functions downstream of retinol dehydrogenases and catalyzes the oxidation of retinaldehyde into retinoic acid, the second step in the oxidation of retinol/vitamin A into retinoic acid. This pathway is crucial to control the levels of retinol and retinoic acid, two important molecules which excess can be teratogenic and cytotoxic. Also oxidizes aldehydes resulting from lipid peroxidation like (E)-4-hydroxynon-2-enal/HNE, malonaldehyde and hexanal that form protein adducts and are highly cytotoxic. By participating for instance to the clearance of (E)-4-hydroxynon-2-enal/HNE in the lens epithelium prevents the formation of HNE-protein adducts and lens opacification. Also functions downstream of fructosamine-3-kinase in the fructosamine degradation pathway by catalyzing the oxidation of 3-deoxyglucosone, the carbohydrate product of fructosamine 3-phosphate decomposition, which is itself a potent glycating agent that may react with lysine and arginine side-chains of proteins. Also has an aminobutyraldehyde dehydrogenase activity and is probably part of an alternative pathway for the biosynthesis of GABA/4-aminobutanoate in midbrain, thereby playing a role in GABAergic synaptic transmission. The chain is Aldehyde dehydrogenase 1A1 from Bos taurus (Bovine).